The sequence spans 301 residues: Aspartate carbamoyltransferase catalytic subunit (301 aa).

Arginine 54 and threonine 55 together coordinate carbamoyl phosphate. Lysine 82 is an L-aspartate binding site. Residues arginine 104, histidine 132, and glutamine 135 each coordinate carbamoyl phosphate. Arginine 165 and arginine 217 together coordinate L-aspartate. Residues glycine 257 and proline 258 each coordinate carbamoyl phosphate.

Belongs to the aspartate/ornithine carbamoyltransferase superfamily. ATCase family. In terms of assembly, heterododecamer (2C3:3R2) of six catalytic PyrB chains organized as two trimers (C3), and six regulatory PyrI chains organized as three dimers (R2).

The catalysed reaction is carbamoyl phosphate + L-aspartate = N-carbamoyl-L-aspartate + phosphate + H(+). It functions in the pathway pyrimidine metabolism; UMP biosynthesis via de novo pathway; (S)-dihydroorotate from bicarbonate: step 2/3. In terms of biological role, catalyzes the condensation of carbamoyl phosphate and aspartate to form carbamoyl aspartate and inorganic phosphate, the committed step in the de novo pyrimidine nucleotide biosynthesis pathway. The protein is Aspartate carbamoyltransferase catalytic subunit of Thermus aquaticus.